Here is a 60-residue protein sequence, read N- to C-terminus: Large ribosomal subunit protein bL32 (60 aa).

The segment covering 1–19 has biased composition (basic residues); the sequence is MAVPKRKKSKSRRNMHRSH. Residues 1 to 24 form a disordered region; that stretch reads MAVPKRKKSKSRRNMHRSHHAIEP.

Belongs to the bacterial ribosomal protein bL32 family.

The chain is Large ribosomal subunit protein bL32 from Wolbachia pipientis wMel.